A 391-amino-acid polypeptide reads, in one-letter code: Small ribosomal subunit protein bS1 (391 aa).

S1 motif domains follow at residues 16 to 90 (GDKV…LSRR), 108 to 173 (NEII…LSRK), 194 to 262 (GDVI…LSIK), and 279 to 348 (NDVI…LSIK).

The protein belongs to the bacterial ribosomal protein bS1 family.

Its function is as follows. Binds mRNA; thus facilitating recognition of the initiation point. It is needed to translate mRNA with a short Shine-Dalgarno (SD) purine-rich sequence. The sequence is that of Small ribosomal subunit protein bS1 (rpsA) from Staphylococcus aureus (strain MSSA476).